The sequence spans 236 residues: uncharacterized protein (236 aa).

The RPE1 insert domain maps to 117–160; it reads RYLSKQTDRNEFITTAESYIGISKHKSTNITYKLPLKEQFCNMS.

This is an uncharacterized protein from Rickettsia prowazekii (strain Madrid E).